The primary structure comprises 173 residues: Large ribosomal subunit protein bL17 (173 aa).

Positions 136–173 are disordered; it reads AEEEAPAVEAEATEATEAPVEEAAAVEAEAPADAEKAE. Over residues 138–149 the composition is skewed to acidic residues; the sequence is EEAPAVEAEATE. Residues 150–166 are compositionally biased toward low complexity; sequence ATEAPVEEAAAVEAEAP.

The protein belongs to the bacterial ribosomal protein bL17 family. As to quaternary structure, part of the 50S ribosomal subunit. Contacts protein L32.

The chain is Large ribosomal subunit protein bL17 from Bifidobacterium longum subsp. infantis (strain ATCC 15697 / DSM 20088 / JCM 1222 / NCTC 11817 / S12).